Consider the following 294-residue polypeptide: 4-hydroxybenzoate octaprenyltransferase (294 aa).

7 helical membrane-spanning segments follow: residues 37-57 (LWAM…WIFF), 101-121 (LAVA…LNAL), 142-162 (FFAI…PMAF), 169-189 (VPFV…AYDT), 219-239 (IMIC…LLGL), 241-261 (WPYY…YTLI), and 271-293 (AAFR…AYLL).

Belongs to the UbiA prenyltransferase family. It depends on Mg(2+) as a cofactor.

The protein resides in the cell inner membrane. The enzyme catalyses all-trans-octaprenyl diphosphate + 4-hydroxybenzoate = 4-hydroxy-3-(all-trans-octaprenyl)benzoate + diphosphate. It participates in cofactor biosynthesis; ubiquinone biosynthesis. Its function is as follows. Catalyzes the prenylation of para-hydroxybenzoate (PHB) with an all-trans polyprenyl group. Mediates the second step in the final reaction sequence of ubiquinone-8 (UQ-8) biosynthesis, which is the condensation of the polyisoprenoid side chain with PHB, generating the first membrane-bound Q intermediate 3-octaprenyl-4-hydroxybenzoate. The protein is 4-hydroxybenzoate octaprenyltransferase of Cupriavidus metallidurans (strain ATCC 43123 / DSM 2839 / NBRC 102507 / CH34) (Ralstonia metallidurans).